Reading from the N-terminus, the 278-residue chain is MSKPTDQLYYANGVDSYIAETHAWRTPETCSTYMLKYVKKTDRILDVGCGPGTITVGFPKYVPEGEVIGVEPSQELLDKAEEALRKEETLKKEKINNCSFRLGSIYKLPFPDNTFDIVNTHQVLVHLQDPVAALVELKRVTKPGGYVCCKEADLLSACVYPKEYEHDLLLQSQARINLHGTNPTAGRSLRGWAIDAKYVAENIHSSASTWCFADEETRKWVSRLFIQRVLHSNERLDDDDAKDQSLRKRVAEAWQRWKEDSRGCFFMTDGQIVYKKEE.

The protein resides in the cytoplasm. It is found in the nucleus. Functionally, probable methyltransferase. This is an uncharacterized protein from Schizosaccharomyces pombe (strain 972 / ATCC 24843) (Fission yeast).